Here is a 326-residue protein sequence, read N- to C-terminus: Macrosialin (326 aa).

Positions 1 to 20 (MRLPVCLILLGPLIAQGTEE) are cleaved as a signal peptide. The tract at residues 21–109 (DCPHKKAVTL…ATSPRSSTVG (89 aa)) is mucin-like. At 21–291 (DCPHKKAVTL…PCFSCNRDQS (271 aa)) the chain is on the extracellular side. Over residues 38 to 58 (PTATESTASPTTSHRPTTTSH) the composition is skewed to low complexity. Positions 38 to 129 (PTATESTASP…SPRSKGALGN (92 aa)) are disordered. Repeat copies occupy residues 44-49 (TASPTT), 50-64 (SHRP…VTVH), 65-72 (TSSGPTTV), and 73-88 (THNP…ATIS). Residues 59–69 (GNVTVHTSSGP) are compositionally biased toward polar residues. A glycan (N-linked (GlcNAc...) asparagine) is linked at Asn60. A compositionally biased stretch (low complexity) spans 70-80 (TTVTHNPATTT). The segment covering 81–108 (SHGNATISHATVSPTTNGTATSPRSSTV) has biased composition (polar residues). N-linked (GlcNAc...) asparagine glycosylation is found at Asn84 and Asn97. Residues 111-120 (HPGPPPPSPS) are compositionally biased toward pro residues. Asn129, Asn134, Asn169, Asn218, Asn233, and Asn251 each carry an N-linked (GlcNAc...) asparagine glycan. Cys139 and Cys177 are oxidised to a cystine. The cysteines at positions 249 and 286 are disulfide-linked. The chain crosses the membrane as a helical span at residues 292–316 (LLLPLIIGLVLLGLLTLVLIAFCIT). The Cytoplasmic portion of the chain corresponds to 317–326 (RRRQSTYQPL).

Belongs to the LAMP family. In terms of processing, N- and O-glycosylated. In terms of tissue distribution, expressed in tissue macrophages and to a lesser extent in dendritic cells.

It localises to the endosome membrane. The protein localises to the lysosome membrane. It is found in the cell membrane. Its function is as follows. Could play a role in phagocytic activities of tissue macrophages, both in intracellular lysosomal metabolism and extracellular cell-cell and cell-pathogen interactions. Binds to tissue- and organ-specific lectins or selectins, allowing homing of macrophage subsets to particular sites. Rapid recirculation of CD68 from endosomes and lysosomes to the plasma membrane may allow macrophages to crawl over selectin-bearing substrates or other cells. This chain is Macrosialin (Cd68), found in Mus musculus (Mouse).